The chain runs to 364 residues: Transcriptional regulator ICP22 homolog (364 aa).

Disordered regions lie at residues 1 to 73 (MDRV…HGAR) and 173 to 364 (VIEG…AAAP). Over residues 12–46 (VPSPPFSPVDPPGPRPTTPVPGSSPPSPASTPTPP) the composition is skewed to pro residues. Acidic residues-rich tracts occupy residues 181–191 (EECDVDEDDAG), 207–286 (CEDD…DGSD), and 294–343 (DGGD…GEGE). The span at 355-364 (RAPTRPAAAP) shows a compositional bias: low complexity.

Belongs to the herpesviridae ICP22 family.

This is Transcriptional regulator ICP22 homolog (RSP40) from Sus scrofa (Pig).